The primary structure comprises 161 residues: Protein-export protein SecB (161 aa).

The protein belongs to the SecB family. In terms of assembly, homotetramer, a dimer of dimers. One homotetramer interacts with 1 SecA dimer.

Its subcellular location is the cytoplasm. Its function is as follows. One of the proteins required for the normal export of preproteins out of the cell cytoplasm. It is a molecular chaperone that binds to a subset of precursor proteins, maintaining them in a translocation-competent state. It also specifically binds to its receptor SecA. In Ectopseudomonas mendocina (strain ymp) (Pseudomonas mendocina), this protein is Protein-export protein SecB.